The chain runs to 355 residues: Tetraacyldisaccharide 4'-kinase (355 aa).

Residue tyrosine 64–threonine 71 coordinates ATP. The tract at residues asparagine 206–alanine 226 is disordered. The span at alanine 208 to glycine 222 shows a compositional bias: low complexity.

Belongs to the LpxK family.

The enzyme catalyses a lipid A disaccharide + ATP = a lipid IVA + ADP + H(+). Its pathway is glycolipid biosynthesis; lipid IV(A) biosynthesis; lipid IV(A) from (3R)-3-hydroxytetradecanoyl-[acyl-carrier-protein] and UDP-N-acetyl-alpha-D-glucosamine: step 6/6. In terms of biological role, transfers the gamma-phosphate of ATP to the 4'-position of a tetraacyldisaccharide 1-phosphate intermediate (termed DS-1-P) to form tetraacyldisaccharide 1,4'-bis-phosphate (lipid IVA). In Bordetella petrii (strain ATCC BAA-461 / DSM 12804 / CCUG 43448), this protein is Tetraacyldisaccharide 4'-kinase.